Here is a 258-residue protein sequence, read N- to C-terminus: UPF0246 protein HS_0482 (258 aa).

This sequence belongs to the UPF0246 family.

The chain is UPF0246 protein HS_0482 from Histophilus somni (strain 129Pt) (Haemophilus somnus).